A 221-amino-acid chain; its full sequence is Deoxyribose-phosphate aldolase (221 aa).

Catalysis depends on D90, which acts as the Proton donor/acceptor. Catalysis depends on K152, which acts as the Schiff-base intermediate with acetaldehyde. The active-site Proton donor/acceptor is the K181.

It belongs to the DeoC/FbaB aldolase family. DeoC type 1 subfamily.

The protein resides in the cytoplasm. The enzyme catalyses 2-deoxy-D-ribose 5-phosphate = D-glyceraldehyde 3-phosphate + acetaldehyde. Its pathway is carbohydrate degradation; 2-deoxy-D-ribose 1-phosphate degradation; D-glyceraldehyde 3-phosphate and acetaldehyde from 2-deoxy-alpha-D-ribose 1-phosphate: step 2/2. In terms of biological role, catalyzes a reversible aldol reaction between acetaldehyde and D-glyceraldehyde 3-phosphate to generate 2-deoxy-D-ribose 5-phosphate. This is Deoxyribose-phosphate aldolase from Syntrophotalea carbinolica (strain DSM 2380 / NBRC 103641 / GraBd1) (Pelobacter carbinolicus).